Reading from the N-terminus, the 1095-residue chain is MAEGAAGREDPAPPDAAGGEDDPRVGPDAAGDCVTAASGGRMRDRRSGVALPGAAGTPADSEAGLLEAARATPRRSSIIKDPSNQKCGGRKKTVSFSSMPSEKKISSANDCISFMQAGCELKKVRPNSRIYNRFFTLDTDLQALRWEPSKKDLEKAKLDISAIKEIRLGKNTETFRNNGLADQICEDCAFSILHGENYESLDLVANSADVANIWVSGLRYLVSRSKQPLDFMEGNQNTPRFMWLKTVFEAADVDGNGIMLEDTSVELIKQLNPTLKEAKIRLKFKEIQKSKEKLTTRVTEEEFCEAFCELCTRPEVYFLLVQISKNKEYLDANDLMLFLEAEQGVTHITEDICLDIIRRYELSEEGRQKGFLAIDGFTQYLLSSECDIFDPEQKKVAQDMTQPLSHYYINASHNTYLIEDQFRGPADINGYIRALKMGCRSVELDVSDGSDNEPILCNRNNMTTHVSFRSVIEVINKFAFVASEYPLILCLGNHCSLPQQKVMAQQMKKVFGNKLYTEAPLPSESYLPSPEKLKRMIIVKGKKLPSDPDVLEGEVTDEDEEAEMSRRMSVDYNGEQKQIRLCRELSDLVSICKSVQYRDFELSMKSQNYWEMCSFSETEASRIANEYPEDFVNYNKKFLSRIYPSAMRIDSSNLNPQDFWNCGCQIVAMNFQTPGPMMDLHTGWFLQNGGCGYVLRPSIMRDEVSYFSANTKGILPGVSPLALHIKIISGQNFPKPKGACAKGDVIDPYVCIEIHGIPADCSEQRTKTVQQNSDNPIFDETFEFQVNLPELAMIRFVVLDDDYIGDEFIGQYTIPFECLQPGYRHVPLRSFVGDIMEHVTLFVHIAITNRSGGGKAQKRSLSVRMGKKVREYTMLRNIGLKTIDDIFKIAVHPLREAIDMRENMQNAIVSIKELCGLPPIASLKQCLLTLSSRLITSDNTPSVSLVMKDSFPYLEPLGAIPDVQKKMLTAYDLMIQESRFLIEMADTVQEKIVQCQKAGMEFHEELHNLGAKEGLKGRKLNKATESFAWNITVLKGQGDLLKNAKNEAIENMKQIQLACLSCGLSKAPSSSAEAKSKRSLEAIEEKESSEENGKL.

The segment covering 1 to 11 has biased composition (basic and acidic residues); the sequence is MAEGAAGREDP. The disordered stretch occupies residues 1 to 61; the sequence is MAEGAAGRED…PGAAGTPADS (61 aa). Serine 47 and serine 77 each carry phosphoserine. An interaction with PPP1C region spans residues 83 to 222; that stretch reads SNQKCGGRKK…IWVSGLRYLV (140 aa). Threonine 93 bears the Phosphothreonine; by PKA mark. Serine 95 bears the Phosphoserine mark. The region spanning 113–223 is the PH domain; the sequence is SFMQAGCELK…WVSGLRYLVS (111 aa). In terms of domain architecture, PI-PLC X-box spans 398-542; it reads QDMTQPLSHY…LKRMIIVKGK (145 aa). An interaction with GABA A beta subunit region spans residues 543–567; it reads KLPSDPDVLEGEVTDEDEEAEMSRR. Threonine 556 is modified (phosphothreonine). Position 569 is a phosphoserine (serine 569). A PI-PLC Y-box domain is found at 585-701; it reads LSDLVSICKS…GYVLRPSIMR (117 aa). The region spanning 701 to 830 is the C2 domain; sequence RDEVSYFSAN…PGYRHVPLRS (130 aa). 2 coiled-coil regions span residues 894–914 and 1034–1059; these read LREAIDMRENMQNAIVSIKEL and LKGQGDLLKNAKNEAIENMKQIQLAC. The segment at 1066-1095 is disordered; that stretch reads KAPSSSAEAKSKRSLEAIEEKESSEENGKL. Residues 1074–1095 are compositionally biased toward basic and acidic residues; it reads AKSKRSLEAIEEKESSEENGKL. Serine 1079 carries the phosphoserine modification.

In terms of assembly, interacts with PPP2CA. Interacts with Ins(1,4,5)P3, Ins(1,4,5,6)P4, GABARAP, GABA receptor beta subunits, GABA receptor gamma-2 subunits and PPP1C. May form a ternary complex with GABA receptor beta subunit and GABARAP. The formation of a ternary complex with GABA receptor beta subunit and GABARAP could be the key step for facilitating the association of GABARAP with the GABA receptor gamma-2 subunit and to allow it to be transported at the right destination. In terms of processing, phosphorylated by the catalytic subunit of PKA. Phosphorylation of Thr-93 resulted in dissociation of PPP1C from PRIP1. In terms of tissue distribution, expressed in a variety of fetal and adult organs including brain, lung and kidney. Its expression was greatly reduced in small and non-small cell lung carcinoma. Isoform 1 is predominantly expressed in brain.

Its subcellular location is the cytoplasm. In terms of biological role, involved in an inositol phospholipid-based intracellular signaling cascade. Shows no PLC activity to phosphatidylinositol 4,5-bisphosphate and phosphatidylinositol. Component in the phospho-dependent endocytosis process of GABA A receptor. Regulates the turnover of receptors and thus contributes to the maintenance of GABA-mediated synaptic inhibition. Its aberrant expression could contribute to the genesis and progression of lung carcinoma. Acts as an inhibitor of PPP1C. This is Inactive phospholipase C-like protein 1 (PLCL1) from Homo sapiens (Human).